The chain runs to 254 residues: NAD-dependent protein deacylase 2 (254 aa).

A Deacetylase sirtuin-type domain is found at 1-254 (MDEHSIMQAV…LPALVRRLGV (254 aa)). 24–44 (GAGMSADSGLETYRDPETGVW) lines the NAD(+) pocket. The substrate site is built by tyrosine 69 and arginine 72. An NAD(+)-binding site is contributed by 105–108 (QNID). Histidine 123 functions as the Proton acceptor in the catalytic mechanism. Cysteine 131, cysteine 134, cysteine 157, and cysteine 160 together coordinate Zn(2+). Residues 197 to 199 (GTS) and alanine 241 contribute to the NAD(+) site.

It belongs to the sirtuin family. Class III subfamily. Zn(2+) is required as a cofactor.

The protein resides in the cytoplasm. It carries out the reaction N(6)-acetyl-L-lysyl-[protein] + NAD(+) + H2O = 2''-O-acetyl-ADP-D-ribose + nicotinamide + L-lysyl-[protein]. The enzyme catalyses N(6)-succinyl-L-lysyl-[protein] + NAD(+) + H2O = 2''-O-succinyl-ADP-D-ribose + nicotinamide + L-lysyl-[protein]. NAD-dependent lysine deacetylase and desuccinylase that specifically removes acetyl and succinyl groups on target proteins. Modulates the activities of several proteins which are inactive in their acylated form. The polypeptide is NAD-dependent protein deacylase 2 (Corynebacterium efficiens (strain DSM 44549 / YS-314 / AJ 12310 / JCM 11189 / NBRC 100395)).